The primary structure comprises 513 residues: Bone morphogenetic protein 6 (513 aa).

An N-terminal signal peptide occupies residues 1–20 (MPGLGRRAQWLCWWWGLLCS). The propeptide occupies 21–374 (CCGPPPLRPP…VSEVHVRTTR (354 aa)). 3 disordered regions span residues 38 to 66 (AAGG…SSGF), 89 to 131 (LPHR…RLKS), and 145 to 200 (ADND…ASPL). The span at 98-121 (GLQQPQPPALRQQEEQQQQQQLPR) shows a compositional bias: low complexity. The span at 158–172 (QQSWPHEAASSSQRR) shows a compositional bias: polar residues. 5 N-linked (GlcNAc...) asparagine glycosylation sites follow: N241, N269, N386, N404, and N454. The interval 373–398 (TRSASSRRRQQSRNRSTQSQDVARVS) is disordered. 3 disulfides stabilise this stretch: C412–C478, C441–C510, and C445–C512.

Belongs to the TGF-beta family. In terms of assembly, interacts with SOSTDC1. Interacts (when glycosylated) with type I receptor ACVR1; the interaction may induce HAMP expression. Interacts with type II receptor ACVR2B. Interacts with Hemojuvelin/HJV. Interacts with ERFE; the interaction inhibits BMP-induced transcription of HAMP. Interacts with BMPR1A/ALK3. Forms heterodimers with BMP2 in vitro; the heterodimer then binds to its receptor BMPR1A /ALK3 and may induce HAMP expression. Glycosylated at Asn-454. Glycosylation is crucial for recognition by the activin receptor type I/ACVR1.

Its subcellular location is the secreted. Functionally, growth factor of the TGF-beta superfamily that plays essential roles in many developmental processes including cartilage and bone formation. Also plays an important role in the regulation of HAMP/hepcidin expression and iron metabolism by acting as a ligand for hemojuvelin/HJV. Also acts to promote expression of HAMP, potentially via the interaction with its receptor BMPR1A/ALK3. Initiates the canonical BMP signaling cascade by associating with type I receptor ACVR1 and type II receptor ACVR2B. In turn, ACVR1 propagates signal by phosphorylating SMAD1/5/8 that travel to the nucleus and act as activators and repressors of transcription of target. Can also signal through non-canonical pathway such as TAZ-Hippo signaling cascade to modulate VEGF signaling by regulating VEGFR2 expression. This is Bone morphogenetic protein 6 (BMP6) from Homo sapiens (Human).